The chain runs to 233 residues: MAGVRSLRCSRGCAGGCECGDKGKCSDSSLLGKRLSEDSSRHQLLQKWASMWSSMSEDASVADMERAQLEEEAAAAEERPLVFLCSGCRRPLGDSLSWVASQEDTNCILLRCVSCNVSVDKEQKLSKREKENGCVLETLCCAGCSLNLGYVYRCTPKNLDYKRDLFCLSVEAIESYVLGSSEKQIVSEDKELFNLESRVEIEKSLTQMEDVLKALQMKLWEAESKLSFATCKS.

Residues Ser-36, Ser-39, and Ser-40 each carry the phosphoserine modification. Positions 80 to 178 (PLVFLCSGCR…SVEAIESYVL (99 aa)) constitute a Mis18 domain. Residues Cys-85, Cys-88, Cys-141, and Cys-144 each coordinate Zn(2+). A Glycyl lysine isopeptide (Lys-Gly) (interchain with G-Cter in SUMO2) cross-link involves residue Lys-162. Ser-233 carries the phosphoserine modification.

This sequence belongs to the mis18 family. In terms of assembly, homodimer, and heterodimer with OIP5/MIS18B. Identified in a complex containing MIS18A, OIP5/MIS18B, MIS18BP1, RBBP7 and RBBP4. Detected in testis.

Its subcellular location is the nucleus. The protein resides in the chromosome. The protein localises to the centromere. Functionally, required for recruitment of CENPA to centromeres and normal chromosome segregation during mitosis. This is Protein Mis18-alpha (MIS18A) from Homo sapiens (Human).